The following is an 876-amino-acid chain: Alanine--tRNA ligase (876 aa).

K74 carries the N6-acetyllysine modification. Residues H564, H568, C666, and H670 each coordinate Zn(2+).

The protein belongs to the class-II aminoacyl-tRNA synthetase family. As to quaternary structure, homotetramer. Zn(2+) serves as cofactor.

Its subcellular location is the cytoplasm. The enzyme catalyses tRNA(Ala) + L-alanine + ATP = L-alanyl-tRNA(Ala) + AMP + diphosphate. In terms of biological role, catalyzes the attachment of alanine to tRNA(Ala) in a two-step reaction: alanine is first activated by ATP to form Ala-AMP and then transferred to the acceptor end of tRNA(Ala). Also edits incorrectly charged Ser-tRNA(Ala) and Gly-tRNA(Ala) via its editing domain. The polypeptide is Alanine--tRNA ligase (Shigella flexneri serotype 5b (strain 8401)).